The chain runs to 327 residues: Gamma-resorcylate decarboxylase (327 aa).

Residues Glu-8 and His-10 each contribute to the Zn(2+) site. Phe-23, His-164, and Asp-287 together coordinate 2,6-dihydroxybenzoate. Positions 164 and 287 each coordinate Zn(2+). The active site involves Asp-287.

This sequence belongs to the metallo-dependent hydrolases superfamily. ACMSD family. Homotetramer. Dimer of dimers. Requires Zn(2+) as cofactor.

The catalysed reaction is 2,6-dihydroxybenzoate + H(+) = resorcinol + CO2. The enzyme catalyses 2,3-dihydroxybenzoate + H(+) = catechol + CO2. It functions in the pathway aromatic compound metabolism. Inhibited by CuCl(2), monoiodoacetate and diethylpyrocarbonate. Inhibited by 2,3-dihydroxybenzaldehyde, which is an analog of the substrate 2,3-dihydroxybenzoate. In terms of biological role, involved in the gamma-resorcylate (2,6-dihydroxybenzoate) catabolism. Catalyzes the reversible decarboxylation of gamma-resorcylate to resorcinol. The reaction is reversible, but equilibrium greatly favors the decarboxylation reaction. Also catalyzes the decarboxylation of 2,3-dihydroxybenzoate to catechol, but does not act on 2,4-dihydroxybenzoate, 2,5-dihydroxybenzoate, 3,4-dihydroxybenzoate, 3,5-dihydroxybenzoate, 2-hydroxybenzoate, or 3-hydroxybenzoate. Only resorcinol is carboxylated by the reverse reaction. This is Gamma-resorcylate decarboxylase from Rhizobium sp. (strain MTP-10005).